We begin with the raw amino-acid sequence, 469 residues long: MTAQTLYDKLWNSHVVREEEDGTVLLYIDRHLVHEVTSPQAFEGLKMAGRKLWRIDSVVSTADHNTPTGDWDKGIQDPISKLQVDTLDKNIKEFGALAYFPFMDKGQGIVHVMGPEQGATLPGMTVVCGDSHTSTHGAFGALAHGIGTSEVEHTMATQCITAKKSKSMLIAVDGKLKAGVTAKDVALYIIGQIGTAGGTGYAVEFGGEAIRSLSMEGRMTLCNMAIEAGARSGMVAVDQTTIDYVKDKPFAPEGEAWDKAVEYWRTLVSDEGAVFDKEYRFNAEDIEPQVTWGTSPEMVLDISSKVPNPAEETDPVKRSGMERALEYMGLEAGTPLNEIPVDIVFIGSCTNSRIEDLREAAAIAKDRKKAANVQRVLIVPGSGLVKEQAEKEGLDKIFIEAGFEWREPGCSMCLAMNADRLTPGQRCASTSNRNFEGRQGNGGRTHLVSPAMAAAAAVTGRFTDIRMMA.

[4Fe-4S] cluster is bound by residues C349, C410, and C413.

This sequence belongs to the aconitase/IPM isomerase family. LeuC type 1 subfamily. In terms of assembly, heterodimer of LeuC and LeuD. Requires [4Fe-4S] cluster as cofactor.

It catalyses the reaction (2R,3S)-3-isopropylmalate = (2S)-2-isopropylmalate. It participates in amino-acid biosynthesis; L-leucine biosynthesis; L-leucine from 3-methyl-2-oxobutanoate: step 2/4. Its function is as follows. Catalyzes the isomerization between 2-isopropylmalate and 3-isopropylmalate, via the formation of 2-isopropylmaleate. This Neisseria meningitidis serogroup C / serotype 2a (strain ATCC 700532 / DSM 15464 / FAM18) protein is 3-isopropylmalate dehydratase large subunit.